Here is a 467-residue protein sequence, read N- to C-terminus: 3-isopropylmalate dehydratase large subunit (467 aa).

3 residues coordinate [4Fe-4S] cluster: C347, C407, and C410.

The protein belongs to the aconitase/IPM isomerase family. LeuC type 1 subfamily. In terms of assembly, heterodimer of LeuC and LeuD. [4Fe-4S] cluster is required as a cofactor.

It carries out the reaction (2R,3S)-3-isopropylmalate = (2S)-2-isopropylmalate. It participates in amino-acid biosynthesis; L-leucine biosynthesis; L-leucine from 3-methyl-2-oxobutanoate: step 2/4. Catalyzes the isomerization between 2-isopropylmalate and 3-isopropylmalate, via the formation of 2-isopropylmaleate. The chain is 3-isopropylmalate dehydratase large subunit from Pelagibacter ubique (strain HTCC1062).